We begin with the raw amino-acid sequence, 472 residues long: RING-H2 finger protein ATL13 (472 aa).

Residues 51–71 traverse the membrane as a helical segment; sequence ILLIIIILSIIFFISGLLHLL. Residues 134-176 form an RING-type; atypical zinc finger; that stretch reads CAVCLCEFETEDKLRLLPKCSHAFHMDCIDTWLLSHSTCPLCR. Residues 320–340 form a disordered region; it reads VSTKKQSSKNRGLPGHRTAMS.

Belongs to the RING-type zinc finger family. ATL subfamily.

It is found in the membrane. It catalyses the reaction S-ubiquitinyl-[E2 ubiquitin-conjugating enzyme]-L-cysteine + [acceptor protein]-L-lysine = [E2 ubiquitin-conjugating enzyme]-L-cysteine + N(6)-ubiquitinyl-[acceptor protein]-L-lysine.. The protein operates within protein modification; protein ubiquitination. The sequence is that of RING-H2 finger protein ATL13 (ATL13) from Arabidopsis thaliana (Mouse-ear cress).